The chain runs to 222 residues: UPF0758 protein CT0611 (222 aa).

The 123-residue stretch at 100 to 222 (KVKGARDVFE…WFSFRDHALL (123 aa)) folds into the MPN domain. Residues His-171, His-173, and Asp-184 each contribute to the Zn(2+) site. The JAMM motif signature appears at 171–184 (HNHPSGDVQPSNAD).

The protein belongs to the UPF0758 family.

The protein is UPF0758 protein CT0611 of Chlorobaculum tepidum (strain ATCC 49652 / DSM 12025 / NBRC 103806 / TLS) (Chlorobium tepidum).